The primary structure comprises 88 residues: UPF0297 protein SAK_2030 (88 aa).

It belongs to the UPF0297 family.

This Streptococcus agalactiae serotype Ia (strain ATCC 27591 / A909 / CDC SS700) protein is UPF0297 protein SAK_2030.